Consider the following 1828-residue polypeptide: MPENPAPDKLQVLQVLDRLKMKLQEKGDTSQNEKLSLFYETLQSPLFNQILTLQQSIKQLKGQLSHIPSDCSTNFDFSRKGLLVFTDSAITNGNAQRPSNNLTVSGLFPWTPKSGNEDFNSVIQQMAQGRQIEYIDIERPSTGGLGFSVVALRSQNLGEVDIFVKEVQPGSIADRDQRLRENDQILAINHTPLDQNISHQQAIALLQQTTGSLHLVVAREPVHTKSRTSINLTDTTMPETVHWGHIEDVELINDGSGLGFGIVGGKSSGVVVRTIVPGGLADRDGRLQTGDHILKIGDTDVQGMTSEQVAQVLRNCGNSVRMLVARDPVGETSVTPPTPAALPVALPAVANRSPSTDSSLYETYGVELIKKDGQSLGIRIVGYIGTAHTGEASGIYVKSIIPGSAAYHNGQIQVNDKIVAVDGVNIQGFTNQDVVEVLRNAGQVVHLTLVRRKMCSSTSPLERSSDRGTVVEPSGTPARYVTGAVETETNLDGGDEETEERMDNLKNDNIQALEKLERVPDSPENELKSRWENLLGPDYEVMVATLDTQIADDAELQKYSKLLPIHTLRLGMEVDSFDGHHYISSIAPGGPVDALNLLQPEDELLEVNGVQLYGKSRREAVSFLKEVPPPFTLVCCRRLFDDEASVDEPRTTETLLPEMEADHNVDINTEEEEEEELALWSPEVKIVELVKDHKGLGFSILDYQDPLDPTRSVIVIRSLVANGVAEKGGELLPGDRLVSVNEYCLENTTLAEAVEVLKAVPPGIVHLGVCKPLVDNDKEEESHYILHSNNNEDETELSETIHDINSSLILEAPKGFRDEPYYKEELVDEPFLDLGKAFQSQQKEIDNSKEAWEMQEFLPPRLQEMGEEREMLVDEECDLYQDHFQSMDLYPSSHLQEAAPVSSVKELHFGTQWLHDSEPPELQEARSMMNMYSQETQQYGYSTENMIKENFGIDSLPSISSSEGNSQQGRFDDLENLNSLTKSSLDLGMMIPNDVQGPGMLVELPAVAQRREQEDLPLYQLPRTRVVSKASAYTGASSSRYTAGACELPEREEGEGEETPNFSHWGPPRIVEIFREPNVSLGISIVGGQTVIKRLKNGEELKGIFIKQVLEDSPAGKTNALKTGDKILEVSGVDLQNASHREAVEAIKNAGNPVVFVVQSLSSTPRVIPSVHNKANKIANNQDQNTEEKKEKRQGTPPPPMKLPPPYKAPSDDSDENEEEYAFTNKKIRQRYADLPGELHIIELEKDKNGLGLSLAGNKDRSRMSIFVVGINPEGPAATDGRMRIGDELLEINNQILYGRSHQNASAVIKTAPSKVKLVFIRNEDAVNQMAVAPFPVPSSSPSSLEDQSGTEPVSSEEDGSLEVGIKQLPENESSKLEDISQVAGQGMVAGQQKALDCPTDNAVSQMKPQKYSTKVSFSSQEIPLAPAPSYHSTDVDFTSYGGFQAPLSVDPATCPIVPGQEMIIEISKGRSGLGLSIVGGRDTPLDAIVIHEVYEEGAAARDGRLWAGDQILEVNGIDLRSASHEEAITALRQTPQKVRLVVYRDEAHYRDEENLEIFPVDLQKKAGRGLGLSIVGKRNGSGVFISDIVKGGAADLDRRLIQGDQILSVNGEDMRNASQETVATVLKCAQGLVQLEIGRLRAGSWTSSRKTSQNSQGSQHSTHSSFHPSLAPVITSLQNLVGTKRATDPSLKSSGMDMGPRTVEIIRELSDALGISIAGGKGSPLGDIPIFIAMIQASGVAARTQKLKVGDRIVSINGQPLDGLSHADVVNLLKNAYGRIILQVVADTNISAIATQLENMSTGYHLGSPTAEHHPEDTEEPLQMTAG.

Residues 5-65 (PAPDKLQVLQ…SIKQLKGQLS (61 aa)) form the L27 domain. PDZ domains are found at residues 134 to 221 (YIDI…AREP), 248 to 328 (DVEL…ARDP), and 365 to 453 (GVEL…VRRK). Phosphoserine occurs at positions 459 and 522. One can recognise a PDZ 4 domain in the interval 553 to 639 (DAELQKYSKL…PFTLVCCRRL (87 aa)). S645 bears the Phosphoserine mark. PDZ domains are found at residues 686–758 (IVEL…EVLK) and 1070–1162 (IVEI…QSLS). Positions 1168–1220 (IPSVHNKANKIANNQDQNTEEKKEKRQGTPPPPMKLPPPYKAPSDDSDENEEE) are disordered. Over residues 1196–1208 (TPPPPMKLPPPYK) the composition is skewed to pro residues. S1211 is subject to Phosphoserine. Positions 1241–1324 (IIELEKDKNG…KVKLVFIRNE (84 aa)) constitute a PDZ 7 domain. The interval 1333–1362 (APFPVPSSSPSSLEDQSGTEPVSSEEDGSL) is disordered. A compositionally biased stretch (polar residues) spans 1345–1354 (LEDQSGTEPV). PDZ domains follow at residues 1464-1547 (IIEI…YRDE) and 1560-1642 (PVDL…GRLR). T1535 bears the Phosphothreonine mark. The span at 1645–1668 (SWTSSRKTSQNSQGSQHSTHSSFH) shows a compositional bias: polar residues. Residues 1645–1669 (SWTSSRKTSQNSQGSQHSTHSSFHP) are disordered. The PDZ 10 domain maps to 1703 to 1789 (TVEIIRELSD…RIILQVVADT (87 aa)). The interval 1805–1828 (YHLGSPTAEHHPEDTEEPLQMTAG) is disordered.

Forms a ternary complex with PALS1 and CRB1. Component of a complex whose core is composed of ARHGAP17, AMOT, PALS1, INADL/PATJ and PARD3/PAR3. Forms a heterotrimeric complex composed of MMP5, LIN7B and PATJ; the N-terminal L27 domain of PALS1 interacts with the L27 domain of PATJ and the C-terminal L27 domain of PALS1 interacts with the L27 domain of LIN7B. Component of a complex composed of CRB3, PALS1 and PATJ. As part of the Crumbs complex; interacts with WWP1, the interaction is enhanced by AMOTL2 and facilitates WWP1 localization to the plasma membrane. The Crumbs complex promotes monoubiquitination of AMOTL2 by WWP1, which activates the Hippo signaling pathway. Interacts (via N-terminus) with PALS1/PALS (via PDZ domain). Interacts with TJP3/ZO-3 and CLDN1/claudin-1. Interacts with ASIC3, KCNJ10, KCNJ15, GRIN2A, GRIN2B, GRIN2C, GRIN2D, NLGN2, and HTR2A. Interacts with MPP7. Directly interacts with HTR4. Interacts (via PDZ domain 8) with WWC1 (via the ADDV motif). Interacts with SLC6A4. Interacts (via C-terminus) with ARHGEF18. Interacts with NPHP1. Interacts with PARD3/PAR3. Interacts (via PDZ1-6 domains) with TJP1/ZO1; the interaction is required for attachment and extension of TJP1/ZO1 condensates along the apical cell interface.

The protein resides in the cell junction. The protein localises to the tight junction. It localises to the apical cell membrane. It is found in the cytoplasm. Its subcellular location is the perinuclear region. Its function is as follows. Scaffolding protein that facilitates the localization of proteins to the cell membrane. Required for the correct formation of tight junctions and epithelial apico-basal polarity. Acts (via its L27 domain) as an apical connector and elongation factor for multistranded TJP1/ZO1 condensates that form a tight junction belt, thereby required for the formation of the tight junction-mediated cell barrier. Positively regulates epithelial cell microtubule elongation and cell migration, possibly via facilitating localization of PRKCI/aPKC and PAR3D/PAR3 at the leading edge of migrating cells. Plays a role in the correct reorientation of the microtubule-organizing center during epithelial migration. May regulate the surface expression and/or function of ASIC3 in sensory neurons. May recruit ARHGEF18 to apical cell-cell boundaries. In Canis lupus familiaris (Dog), this protein is InaD-like protein.